Reading from the N-terminus, the 272-residue chain is 3-methyl-2-oxobutanoate hydroxymethyltransferase (272 aa).

Mg(2+) is bound by residues D51 and D90. 3-methyl-2-oxobutanoate-binding positions include 51–52 (DS), D90, and K118. E120 lines the Mg(2+) pocket. The active-site Proton acceptor is E187.

The protein belongs to the PanB family. As to quaternary structure, homodecamer; pentamer of dimers. It depends on Mg(2+) as a cofactor.

The protein resides in the cytoplasm. It catalyses the reaction 3-methyl-2-oxobutanoate + (6R)-5,10-methylene-5,6,7,8-tetrahydrofolate + H2O = 2-dehydropantoate + (6S)-5,6,7,8-tetrahydrofolate. It functions in the pathway cofactor biosynthesis; (R)-pantothenate biosynthesis; (R)-pantoate from 3-methyl-2-oxobutanoate: step 1/2. Its function is as follows. Catalyzes the reversible reaction in which hydroxymethyl group from 5,10-methylenetetrahydrofolate is transferred onto alpha-ketoisovalerate to form ketopantoate. The polypeptide is 3-methyl-2-oxobutanoate hydroxymethyltransferase (Xylella fastidiosa (strain M23)).